The primary structure comprises 313 residues: Ribosomal protein L11 methyltransferase (313 aa).

Residues T154, G179, D201, and N242 each contribute to the S-adenosyl-L-methionine site.

It belongs to the methyltransferase superfamily. PrmA family.

Its subcellular location is the cytoplasm. It carries out the reaction L-lysyl-[protein] + 3 S-adenosyl-L-methionine = N(6),N(6),N(6)-trimethyl-L-lysyl-[protein] + 3 S-adenosyl-L-homocysteine + 3 H(+). Methylates ribosomal protein L11. The sequence is that of Ribosomal protein L11 methyltransferase from Xanthomonas oryzae pv. oryzae (strain MAFF 311018).